The chain runs to 1254 residues: Vitamin B12-dependent ribonucleotide reductase (1254 aa).

Substrate contacts are provided by residues serine 153, 198–199 (AC), glycine 230, 474–478 (NPCSE), and 675–679 (PTGTI). Cysteines 199 and 487 form a disulfide. Asparagine 474 serves as the catalytic Proton acceptor. The active-site Cysteine radical intermediate is the cysteine 476. Glutamate 478 serves as the catalytic Proton acceptor.

The protein belongs to the ribonucleoside diphosphate reductase class-2 family. Requires adenosylcob(III)alamin as cofactor.

The catalysed reaction is a 2'-deoxyribonucleoside 5'-diphosphate + [thioredoxin]-disulfide + H2O = a ribonucleoside 5'-diphosphate + [thioredoxin]-dithiol. Its function is as follows. Catalyzes the reduction of ribonucleotides to deoxyribonucleotides. May function to provide a pool of deoxyribonucleotide precursors for DNA repair during oxygen limitation and/or for immediate growth after restoration of oxygen. The sequence is that of Vitamin B12-dependent ribonucleotide reductase (nrdJ) from Bradyrhizobium diazoefficiens (strain JCM 10833 / BCRC 13528 / IAM 13628 / NBRC 14792 / USDA 110).